Reading from the N-terminus, the 141-residue chain is MAKKVVAIIKLAITAGKANPAPPIGPALGQHGVNIMMFCKEYNARTADQAGLVIPVEISVYEDRSFTFILKTPPASVLIQKAAGIERGSGEPNKKKVGKITTAQLREIAQTKLPDLNANDVDAAMRIVAGTARNMGVTIVD.

This sequence belongs to the universal ribosomal protein uL11 family. Part of the ribosomal stalk of the 50S ribosomal subunit. Interacts with L10 and the large rRNA to form the base of the stalk. L10 forms an elongated spine to which L12 dimers bind in a sequential fashion forming a multimeric L10(L12)X complex. Post-translationally, one or more lysine residues are methylated.

Functionally, forms part of the ribosomal stalk which helps the ribosome interact with GTP-bound translation factors. In Cyanothece sp. (strain PCC 7425 / ATCC 29141), this protein is Large ribosomal subunit protein uL11.